Here is a 285-residue protein sequence, read N- to C-terminus: Bifunctional protein FolD (285 aa).

Residues 166-168 (GAS) and isoleucine 232 contribute to the NADP(+) site.

It belongs to the tetrahydrofolate dehydrogenase/cyclohydrolase family. As to quaternary structure, homodimer.

It carries out the reaction (6R)-5,10-methylene-5,6,7,8-tetrahydrofolate + NADP(+) = (6R)-5,10-methenyltetrahydrofolate + NADPH. It catalyses the reaction (6R)-5,10-methenyltetrahydrofolate + H2O = (6R)-10-formyltetrahydrofolate + H(+). It participates in one-carbon metabolism; tetrahydrofolate interconversion. Its function is as follows. Catalyzes the oxidation of 5,10-methylenetetrahydrofolate to 5,10-methenyltetrahydrofolate and then the hydrolysis of 5,10-methenyltetrahydrofolate to 10-formyltetrahydrofolate. The protein is Bifunctional protein FolD of Vibrio atlanticus (strain LGP32) (Vibrio splendidus (strain Mel32)).